The chain runs to 239 residues: Prolactin-8A4 (239 aa).

Positions 1-31 (MMKLALSQPPFSGTLLMLVVSILLLWEKAAS) are cleaved as a signal peptide. Intrachain disulfides connect Cys-35/Cys-42 and Cys-102/Cys-215. N-linked (GlcNAc...) asparagine glycosylation is found at Asn-211 and Asn-218. A disulfide bridge links Cys-232 with Cys-239.

It belongs to the somatotropin/prolactin family. As to expression, placental basal zone cells.

Its subcellular location is the secreted. This is Prolactin-8A4 (Prl8a4) from Rattus norvegicus (Rat).